The chain runs to 1270 residues: Microtubule-associated tumor suppressor 1 homolog (1270 aa).

Residues 1-14 (MTDDNSDDKIEDEL) show a composition bias toward acidic residues. Disordered regions lie at residues 1-50 (MTDD…NSAN), 183-217 (SFHT…DKMH), and 374-402 (TEDT…SPPG). Residues 39 to 50 (SSASSVNWNSAN) are compositionally biased toward low complexity. Thr-186 carries the post-translational modification Phosphothreonine. Low complexity predominate over residues 200 to 211 (TSSLSYSTWTSS). A phosphoserine mark is found at Ser-386, Ser-399, and Ser-443. Positions 386 to 396 (SGTQNHTSELI) are enriched in polar residues. Disordered stretches follow at residues 524-558 (DAAL…RTPR) and 592-622 (THSK…SSSN). Residues 538–547 (SASSPSSAIS) show a composition bias toward low complexity. Ser-629 carries the post-translational modification Phosphoserine. Composition is skewed to polar residues over residues 701–710 (SKTTTTSGRN), 759–776 (VSSS…SSWV), and 797–816 (TGST…YSNN). The tract at residues 701–816 (SKTTTTSGRN…HSELSTYSNN (116 aa)) is disordered. A coiled-coil region spans residues 940–1231 (IQHLLSEREE…RLSMENEELL (292 aa)). Phosphoserine is present on residues Ser-1203, Ser-1224, Ser-1245, Ser-1255, Ser-1259, Ser-1261, Ser-1264, and Ser-1268. The tract at residues 1237–1270 (GDLCSPKRSPTSSAIPFQSPRNSGSFPSPSISPR) is disordered. Residues 1244–1270 (RSPTSSAIPFQSPRNSGSFPSPSISPR) show a composition bias toward polar residues.

This sequence belongs to the MTUS1 family. In terms of assembly, homodimer. Interacts with AGTR2. Interacts with PTPN6. Associates with microtubules.

It localises to the mitochondrion. The protein localises to the golgi apparatus. Its subcellular location is the cell membrane. The protein resides in the nucleus. Functionally, cooperates with AGTR2 to inhibit ERK2 activation and cell proliferation. May be required for AGTR2 cell surface expression. Together with PTPN6, induces UBE2V2 expression upon angiotensin-II stimulation. This is Microtubule-associated tumor suppressor 1 homolog (MTUS1) from Pongo abelii (Sumatran orangutan).